We begin with the raw amino-acid sequence, 373 residues long: tRNA-specific 2-thiouridylase MnmA (373 aa).

ATP is bound by residues 12-19 (GMSGGVDS) and M38. Positions 98–100 (NPD) are interaction with target base in tRNA. The active-site Nucleophile is C103. C103 and C200 are disulfide-bonded. G127 contributes to the ATP binding site. The interaction with tRNA stretch occupies residues 150–152 (KDQ). Residue C200 is the Cysteine persulfide intermediate of the active site. Residues 312 to 313 (RY) are interaction with tRNA.

Belongs to the MnmA/TRMU family.

Its subcellular location is the cytoplasm. The catalysed reaction is S-sulfanyl-L-cysteinyl-[protein] + uridine(34) in tRNA + AH2 + ATP = 2-thiouridine(34) in tRNA + L-cysteinyl-[protein] + A + AMP + diphosphate + H(+). Functionally, catalyzes the 2-thiolation of uridine at the wobble position (U34) of tRNA, leading to the formation of s(2)U34. This is tRNA-specific 2-thiouridylase MnmA from Streptococcus sanguinis (strain SK36).